The primary structure comprises 198 residues: Ras-like protein 2 (198 aa).

18–25 (GDGGVGKS) serves as a coordination point for GTP. Residues 40–48 (YDPTIEDSY) carry the Effector region motif. GTP-binding positions include 65–69 (DTAGQ) and 124–127 (NKCD). C195 is subject to Cysteine methyl ester. The S-farnesyl cysteine moiety is linked to residue C195. A propeptide spans 196 to 198 (IVM) (removed in mature form).

This sequence belongs to the small GTPase superfamily. Ras family.

It is found in the cell membrane. It catalyses the reaction GTP + H2O = GDP + phosphate + H(+). Alternates between an inactive form bound to GDP and an active form bound to GTP. Activated by a guanine nucleotide-exchange factor (GEF) and inactivated by a GTPase-activating protein (GAP). The chain is Ras-like protein 2 (RAS2) from Mucor circinelloides f. lusitanicus (Mucor racemosus var. lusitanicus).